The chain runs to 43 residues: ATCDALSFSSKWLTVNHSACAIHCLTKGYKGGRCVNTICNCRN.

3 cysteine pairs are disulfide-bonded: C3–C34, C20–C39, and C24–C41.

The protein localises to the secreted. Functionally, antibacterial peptide active against Gram-positive and Gram-negative bacteria. This chain is Defensin, found in Palomena prasina (Green shield bug).